We begin with the raw amino-acid sequence, 222 residues long: Phosphoglycolate phosphatase (222 aa).

D8 acts as the Nucleophile in catalysis. Mg(2+)-binding residues include D8 and D10. K146 contacts substrate. Residues D169 and D173 each contribute to the Mg(2+) site.

The protein belongs to the archaeal SPP-like hydrolase family. Requires Mg(2+) as cofactor.

It catalyses the reaction 2-phosphoglycolate + H2O = glycolate + phosphate. Catalyzes the dephosphorylation of 2-phosphoglycolate. This is Phosphoglycolate phosphatase from Methanothrix thermoacetophila (strain DSM 6194 / JCM 14653 / NBRC 101360 / PT) (Methanosaeta thermophila).